The primary structure comprises 319 residues: CD2 antigen cytoplasmic tail-binding protein 2 homolog (319 aa).

2 disordered regions span residues 1–57 (MASK…EDDV) and 105–124 (NAFD…KNEP). Basic and acidic residues predominate over residues 12 to 24 (KVKEESFKKHTLD). A phosphoserine mark is found at S25 and S30. Acidic residues predominate over residues 25 to 47 (SDEEDSDDYEREYLNDSDIEGGE). A Phosphotyrosine modification is found at Y37. S41 bears the Phosphoserine mark. A compositionally biased stretch (basic and acidic residues) spans 109–124 (PAKDEENSSDEEKNEP). Positions 260–316 (EVTWEFKWSQDETDIQGPFSTEKMLKWSQENYFKNGVYVRKCGENTNFYTSNRIDFD) constitute a GYF domain.

The protein resides in the nucleus. Required for embryonic epithelial tissue repair, but not for the assembly of the actomyosin cable at the wound edge. Probably acts downstream of rl in the regulation of Ddc and msn transcription to promote wound healing. The protein is CD2 antigen cytoplasmic tail-binding protein 2 homolog (holn1) of Drosophila melanogaster (Fruit fly).